The following is a 311-amino-acid chain: Ribosomal protein L11 methyltransferase (311 aa).

S-adenosyl-L-methionine contacts are provided by Thr-162, Gly-183, Asp-205, and Asn-248.

The protein belongs to the methyltransferase superfamily. PrmA family.

Its subcellular location is the cytoplasm. It catalyses the reaction L-lysyl-[protein] + 3 S-adenosyl-L-methionine = N(6),N(6),N(6)-trimethyl-L-lysyl-[protein] + 3 S-adenosyl-L-homocysteine + 3 H(+). Its function is as follows. Methylates ribosomal protein L11. This is Ribosomal protein L11 methyltransferase from Bacillus licheniformis (strain ATCC 14580 / DSM 13 / JCM 2505 / CCUG 7422 / NBRC 12200 / NCIMB 9375 / NCTC 10341 / NRRL NRS-1264 / Gibson 46).